The following is a 292-amino-acid chain: MVSSMRSLFSDHGKYVESFRRFLNHSTEHQCMQEFMDKKLPGIIARIGDTKSEIKILSIGGGAGEIDLQILSKVQAQYPGVCINNEVVEPSAEQIAKYKGPVAKTSNLENVKFAWHKETSSEYQSRILEKKELQKWDFIHMIQMLYYVKDIPATLKFFHSLLGTNAKMLIIVVSGSSGWDKLWKKYGSRFPQNDLCQYVTSDDLTQMLDNLGLKYECYDLFSTMDISDCFIDGNENGDLLWDFLTETCNFNATAPPDLKAELGKDLQEPEFSAKKEGKVLFNNTLSFIVIEA.

Glutamate 28 lines the substrate pocket. Positions 60, 89, 94, 120, and 142 each coordinate S-adenosyl-L-methionine. Asparagine 283 provides a ligand contact to substrate.

Belongs to the class I-like SAM-binding methyltransferase superfamily. HNMT family. Monomer.

Its subcellular location is the cytoplasm. The enzyme catalyses histamine + S-adenosyl-L-methionine = N(tau)-methylhistamine + S-adenosyl-L-homocysteine + H(+). Inactivates histamine by N-methylation. Plays an important role in degrading histamine and in regulating the airway response to histamine. The sequence is that of Histamine N-methyltransferase (HNMT) from Pongo abelii (Sumatran orangutan).